Consider the following 318-residue polypeptide: Bis(5'-nucleosyl)-tetraphosphatase, symmetrical (318 aa).

Residues Pro-269–Asp-318 are disordered. The span at Ala-282 to Gly-297 shows a compositional bias: basic residues. Low complexity predominate over residues Asn-298 to Pro-311.

Belongs to the Ap4A hydrolase family.

The enzyme catalyses P(1),P(4)-bis(5'-adenosyl) tetraphosphate + H2O = 2 ADP + 2 H(+). Its function is as follows. Hydrolyzes diadenosine 5',5'''-P1,P4-tetraphosphate to yield ADP. This Xanthomonas euvesicatoria pv. vesicatoria (strain 85-10) (Xanthomonas campestris pv. vesicatoria) protein is Bis(5'-nucleosyl)-tetraphosphatase, symmetrical.